A 342-amino-acid chain; its full sequence is MINVGIVGGTGYTGVELLRILAQHPKAKLKVITSRQEAGTGVDDLFSSLRGQITLKFSDPLKVDFGKCDVVFFATPNGIAMQQVSALLGSGIKVIDLSADFRIKDVAEWEEWYGMSHTAPELVAEAVYGLPEVNREKIRNARLIANPGCYPTAVQLGFIPLIEAGAVDENHLIADTKSGVSGAGRKAEIHTLYAEASDNFKSYAVAGHRHLPEIRQGLSERSGKPIDLTFVPHLTPMIRGIHATLYARLTRDVDLQALYESRYANEPFVDVLPAGSHPETRSVRGSNFCRIAVHRPRNGDTAVILSVTDNLVKGAAGQAVQNMNIMYGLPEKMGIQHIPLLP.

Cys149 is a catalytic residue.

It belongs to the NAGSA dehydrogenase family. Type 1 subfamily.

The protein localises to the cytoplasm. The enzyme catalyses N-acetyl-L-glutamate 5-semialdehyde + phosphate + NADP(+) = N-acetyl-L-glutamyl 5-phosphate + NADPH + H(+). It participates in amino-acid biosynthesis; L-arginine biosynthesis; N(2)-acetyl-L-ornithine from L-glutamate: step 3/4. Catalyzes the NADPH-dependent reduction of N-acetyl-5-glutamyl phosphate to yield N-acetyl-L-glutamate 5-semialdehyde. The protein is N-acetyl-gamma-glutamyl-phosphate reductase of Nitrosomonas eutropha (strain DSM 101675 / C91 / Nm57).